Reading from the N-terminus, the 185-residue chain is Anterior gradient protein 2 (185 aa).

The first 18 residues, 1-18, serve as a signal peptide directing secretion; it reads MQTGLSLACLVLLCSVLG. Residues 25–45 are disordered; that stretch reads PKRQAGATDTNGAAKSEPAPV.

The protein belongs to the AGR family. Expressed in the anterior of the dorsal ectoderm from late gastrula stages onwards. Becomes restricted to the cement gland anlage at the onset of neurulation (stages 13 to 14) and expressed exclusively in the cement gland from stage 18 onwards, with transient expression in the hatching gland during tailbud stages.

Its subcellular location is the secreted. Involved in cement gland formation; probably specifies dorsal ectoderm to acquire an anterior fate such as cement gland and forebrain. Signals via the FGF pathway. In Xenopus laevis (African clawed frog), this protein is Anterior gradient protein 2 (ag2).